Reading from the N-terminus, the 1086-residue chain is DNA polymerase delta catalytic subunit (1086 aa).

The disordered stretch occupies residues 1–64 (MTDRSSNEGV…KTSSFEDELA (64 aa)). Over residues 29 to 58 (EITDVKRRRLSERNGYGDKKGSSSKEKTSS) the composition is skewed to basic and acidic residues. Zn(2+)-binding residues include cysteine 993, cysteine 996, cysteine 1008, and cysteine 1011. The CysA-type zinc finger occupies 993-1011 (CLGCKAPIKKGKTALCENC). Positions 1040, 1043, 1053, and 1058 each coordinate [4Fe-4S] cluster. Positions 1040-1058 (CQRCQGSMHQDVICTSRDC) match the CysB motif motif.

This sequence belongs to the DNA polymerase type-B family. Heterotetramer that consist of the pol3, cdc1, cdc27 and cdm1 subunits. The pol3 subunit contains the polymerase active site and most likely the active site for the 3'-5' exonuclease activity. [4Fe-4S] cluster serves as cofactor.

Its subcellular location is the nucleus. It catalyses the reaction DNA(n) + a 2'-deoxyribonucleoside 5'-triphosphate = DNA(n+1) + diphosphate. In terms of biological role, catalytic component of DNA polymerase delta (DNA polymerase III) which participates in chromosomal DNA replication. Required during synthesis of the lagging DNA strands at the replication fork, binds at/or near replication origins and moves along DNA with the replication fork. Participates in leading strand synthesis during replication initiation and termination. Has 3'-5' proofreading exonuclease activity that corrects errors arising during DNA replication. In Schizosaccharomyces pombe (strain 972 / ATCC 24843) (Fission yeast), this protein is DNA polymerase delta catalytic subunit (pol3).